Here is a 78-residue protein sequence, read N- to C-terminus: U-scoloptoxin(04)-Er1d (78 aa).

A signal peptide spans 1 to 24; the sequence is MTRHLIFAAMLLVCLFVCWNAVGA. The propeptide occupies 25-28; sequence RDAR.

It belongs to the scoloptoxin-04 family. Post-translationally, contains 2 disulfide bonds. As to expression, expressed by the venom gland.

It localises to the secreted. This Ethmostigmus rubripes (Giant centipede) protein is U-scoloptoxin(04)-Er1d.